An 87-amino-acid chain; its full sequence is Large ribosomal subunit protein bL27 (87 aa).

The segment at 1–21 is disordered; sequence MAHKKAGGSSRNGRDSESKRL.

Belongs to the bacterial ribosomal protein bL27 family.

The chain is Large ribosomal subunit protein bL27 from Burkholderia ambifaria (strain MC40-6).